A 371-amino-acid polypeptide reads, in one-letter code: Cytochrome b (371 aa).

The next 4 membrane-spanning stretches (helical) occupy residues 25 to 45 (FGSMLLACSSMQVLTGFFLAV), 69 to 90 (WMMQNLHAIGASMFFICIYIHI), 105 to 125 (WLSGTTLLIMLMATAXXXXXX), and 170 to 190 (XXXXXXILPFGIISLSSLHIM). 2 residues coordinate heme b: His-75 and His-89. Heme b-binding residues include Xaa-174 and His-188. His-193 lines the a ubiquinone pocket. Helical transmembrane passes span 218 to 238 (YKDLLMLSLMVLTLLMTVSFL), 280 to 300 (LGGALALAMSIMILLTTPFTH), 312 to 332 (IMQLMFWTLVATFVVITWAAT), and 339 to 358 (FTMISQVASTMYFLFFITNP).

This sequence belongs to the cytochrome b family. In terms of assembly, the cytochrome bc1 complex contains 3 respiratory subunits (MT-CYB, CYC1 and UQCRFS1), 2 core proteins (UQCRC1 and UQCRC2) and probably 6 low-molecular weight proteins. The cofactor is heme b.

The protein localises to the mitochondrion inner membrane. Component of the ubiquinol-cytochrome c reductase complex (complex III or cytochrome b-c1 complex) that is part of the mitochondrial respiratory chain. The b-c1 complex mediates electron transfer from ubiquinol to cytochrome c. Contributes to the generation of a proton gradient across the mitochondrial membrane that is then used for ATP synthesis. The polypeptide is Cytochrome b (MT-CYB) (Eryx jaculus (Javelin sand boa)).